The following is a 434-amino-acid chain: Chaperone SurA (434 aa).

An N-terminal signal peptide occupies residues 1–22 (MKPSKHLIFALFALAISQPTMA). 2 PpiC domains span residues 173 to 274 (DVEY…KIMD) and 283 to 383 (IEEV…QLEE).

It is found in the periplasm. The enzyme catalyses [protein]-peptidylproline (omega=180) = [protein]-peptidylproline (omega=0). Its function is as follows. Chaperone involved in the correct folding and assembly of outer membrane proteins. Recognizes specific patterns of aromatic residues and the orientation of their side chains, which are found more frequently in integral outer membrane proteins. May act in both early periplasmic and late outer membrane-associated steps of protein maturation. The protein is Chaperone SurA of Shewanella sp. (strain MR-7).